A 1249-amino-acid polypeptide reads, in one-letter code: Apoptotic protease-activating factor 1 (1249 aa).

Residues 1–90 enclose the CARD domain; that stretch reads MDAKARNCLL…KDLAGLLHSG (90 aa). The region spanning 106–415 is the NB-ARC domain; the sequence is NTSFVRTVLC…LETEEVEDIL (310 aa). ATP contacts are provided by residues 154 to 161 and arginine 265; that span reads GMAGCGKS. One copy of the WD 1-1 repeat lies at 613 to 652; that stretch reads PHTDAVYHACFSQDGQRIASCGADKTLQVFKAETGEKLLD. The WD 1-2 repeat unit spans residues 655–694; that stretch reads AHEDEVLCCAFSSDDSYIATCSVDKKVKIWDSGTGKLVHT. One copy of the WD 1-3 repeat lies at 697 to 738; that stretch reads EHSEQVNCCHFTNKSNHLLLATGSNDSFLKLWDLNQKECRNT. The stretch at 741–780 is one WD 1-4 repeat; sequence GHTNSVTHCRFSPDDELLASCSADGTLKLWDVRSANEKKS. Residues 796 to 837 form a WD 1-5 repeat; the sequence is DVEVIVKCCSWSADGDRIIVAAKNKVLLLDIHTSGLLTEIHT. Residues 838 to 877 form a WD 1-6 repeat; the sequence is GHHSTIQYCDFSPYDHLAVIALSQYCVELWNIDSRVKVAD. One copy of the WD 1-7 repeat lies at 880–910; the sequence is GHLSWVHGVMFSPDGSSFLTASDDQTIRVWE. The tract at residues 910–921 is interpropeller linker; the sequence is ETRKVCKNSAIV. A WD 2-1 repeat occupies 922–958; that stretch reads LKQEIDVVFQENEMMVLAVDNIRGLQLIAGKTGQIDY. The WD 2-2 repeat unit spans residues 959–998; sequence LPEAQVSCCCLSPHLEYVAFGDEEGAIKIIELPNNRVFSS. The WD 2-3 repeat unit spans residues 1001-1040; it reads GHKKAVRHIQFTADGKTLISSSEDSVIQVWNWQTEEYVFL. Residues 1042-1080 form a WD 2-4 repeat; it reads AHQETVKDFRLLRDSRLLSWSFDGTVKVWNVITGRIERD. The WD 2-5 repeat unit spans residues 1083–1122; it reads CHQGTVLSCAISSDATKFSSTSADKTAKIWSFELPSPLHE. The stretch at 1125–1164 is one WD 2-6 repeat; sequence GHNSCVRCSAFSLDGILLATGDDNGEIRIWNVSDGQLLHL. One copy of the WD 2-7 repeat lies at 1176 to 1213; it reads THGGWVTDVCFSPDRKMLVSAGGYLKWWNVVTGESSQT. Residues 1214–1249 form a WD 2-8 repeat; it reads FYTNGTNLKKIHVSPDFRTYVTVDNLGILYILQVLE.

Monomer. Oligomerizes to a heptameric ring, known as the apoptosome, upon binding of cytochrome c and dATP. Oligomeric Apaf-1 and pro-caspase-9 bind to each other via their respective NH2-terminal CARD domains. Interacts with UACA. Interacts with APIP. Interacts (via CARD and NACHT domains) with NAIP/BIRC1 (via NACHT domain). Interacts with CIAO2A.

It is found in the cytoplasm. Regulates programmed cell death; necessary for normal brain development. Participates with pro-caspase-9 (Apaf-3) in the cytochrome c-dependent activation of caspase-3, leading to apoptosis. This activation requires ATP. The polypeptide is Apoptotic protease-activating factor 1 (Apaf1) (Rattus norvegicus (Rat)).